Consider the following 1711-residue polypeptide: Receptor-type tyrosine-protein phosphatase V (1711 aa).

The signal sequence occupies residues 1 to 17 (MRPLILLAALLWLQGFL). At 18 to 1074 (AEDDACSSLE…SEPRASISLA (1057 aa)) the chain is on the extracellular side. Fibronectin type-III domains are found at residues 37–129 (PLLS…TAPT), 130–222 (VVRG…VPPD), 218–305 (PVPP…EWTY), 306–391 (PSYP…LAES), 393–470 (ALPR…ISGY), 475–569 (PPQS…APPT), 565–654 (PAPP…TGWT), 655–749 (PPSA…IPNE), 744–831 (PLIP…VLSV), and 832–926 (EPGP…SAEA). N-linked (GlcNAc...) asparagine glycosylation is found at Asn-42, Asn-74, Asn-89, Asn-117, Asn-174, Asn-239, and Asn-259. Asn-431 carries N-linked (GlcNAc...) asparagine glycosylation. N-linked (GlcNAc...) asparagine glycans are attached at residues Asn-570, Asn-620, Asn-649, Asn-663, and Asn-737. N-linked (GlcNAc...) asparagine glycans are attached at residues Asn-851, Asn-882, Asn-970, and Asn-982. A helical transmembrane segment spans residues 1075 to 1095 (IIPLTVMLGAVVGSIVIVCAV). Residues 1096–1711 (LCLLRWRCLK…PRAGKWPAPC (616 aa)) are Cytoplasmic-facing. Tyrosine-protein phosphatase domains are found at residues 1150 to 1409 (FFQE…LLNK) and 1427 to 1696 (DFAQ…LNSA). Residues Asp-1316, 1350 to 1356 (CSAGVGR), and Gln-1394 each bind substrate. The active-site Phosphocysteine intermediate is Cys-1350.

Belongs to the protein-tyrosine phosphatase family. Receptor class 3 subfamily. The cytoplasmic domain contains potential phosphorylation sites. As to expression, bone and testis. In the latter, restricted to the basal portion of the seminiferous tubule.

The protein resides in the membrane. The enzyme catalyses O-phospho-L-tyrosyl-[protein] + H2O = L-tyrosyl-[protein] + phosphate. Its function is as follows. Protein tyrosine phosphatase that acts as a regulator of energy metabolism. Prevents decarboxylation of osteocalcin (Bglap) via an indirect mechanism, preventing the hormone activity of osteocalcin. Functions in signaling pathways during bone remodeling, as well as serve a broader role in cell interactions associated with differentiation in bone and testis. Associated with differentiation in bone and testis. This Rattus norvegicus (Rat) protein is Receptor-type tyrosine-protein phosphatase V (Ptprv).